Consider the following 306-residue polypeptide: MKNNNRLKINLPGFELKNPIMPASGCFGFGKEFSELYDLSRLGAIIIKAATKNEKFGNPTPRVAETSSGMLNAIGLQNPGVDHIINHELKELEKYDVPIIANVAGDDIDDYVYVAKRISQAKNVVALELNISCPNVKNGGIQFGTDCNVAYNLTKKVKKVSSKPVYVKLSPNVSDIVGMAKAIEEAKADGLSLINTLIGMALDPKSGKPILANKTGGLSGPAIKPVAIRMIYQVSQAVNIPIIGMGGISNVQDVIDFISAGASAVAIGTANFINPYICVEIIDQLESKLDELNVNHIWDLKGRSYR.

Residues S24 and K48–A49 each bind FMN. Substrate is bound by residues K48 and N72 to L76. N102 and N130 together coordinate FMN. N130 lines the substrate pocket. C133 functions as the Nucleophile in the catalytic mechanism. The FMN site is built by K168 and I194. Substrate is bound at residue N195–T196. FMN-binding positions include G220, G246–G247, and G268–T269.

This sequence belongs to the dihydroorotate dehydrogenase family. Type 1 subfamily. In terms of assembly, heterotetramer of 2 PyrK and 2 PyrD type B subunits. FMN serves as cofactor.

Its subcellular location is the cytoplasm. The enzyme catalyses (S)-dihydroorotate + NAD(+) = orotate + NADH + H(+). It functions in the pathway pyrimidine metabolism; UMP biosynthesis via de novo pathway; orotate from (S)-dihydroorotate (NAD(+) route): step 1/1. Functionally, catalyzes the conversion of dihydroorotate to orotate with NAD(+) as electron acceptor. This chain is Dihydroorotate dehydrogenase B (NAD(+)), catalytic subunit (pyrD), found in Malacoplasma penetrans (strain HF-2) (Mycoplasma penetrans).